Consider the following 374-residue polypeptide: GTPase Obg (374 aa).

One can recognise an Obg domain in the interval 1-159 (MKFIDEVRIH…RDLRLELRLL (159 aa)). The 174-residue stretch at 160-333 (ADVGLLGLPN…LVYAIWQALP (174 aa)) folds into the OBG-type G domain. GTP-binding positions include 166–173 (GLPNAGKS), 191–195 (FTTLY), 213–216 (DIPG), 283–286 (NKSD), and 314–316 (SAA). Positions 173 and 193 each coordinate Mg(2+). A disordered region spans residues 337–374 (PAADPTQTEDWGDESDAGERLENWEGDDLDADWEEEQV). The span at 360 to 374 (WEGDDLDADWEEEQV) shows a compositional bias: acidic residues.

This sequence belongs to the TRAFAC class OBG-HflX-like GTPase superfamily. OBG GTPase family. In terms of assembly, monomer. Requires Mg(2+) as cofactor.

Its subcellular location is the cytoplasm. An essential GTPase which binds GTP, GDP and possibly (p)ppGpp with moderate affinity, with high nucleotide exchange rates and a fairly low GTP hydrolysis rate. Plays a role in control of the cell cycle, stress response, ribosome biogenesis and in those bacteria that undergo differentiation, in morphogenesis control. The protein is GTPase Obg of Acidithiobacillus ferrooxidans (strain ATCC 23270 / DSM 14882 / CIP 104768 / NCIMB 8455) (Ferrobacillus ferrooxidans (strain ATCC 23270)).